Reading from the N-terminus, the 426-residue chain is DUF724 domain-containing protein 9 (426 aa).

Polar residues-rich tracts occupy residues 164–184 (ESSLTQGSGDETSDSVRNANE) and 213–222 (PRNQNASVND). Positions 164-248 (ESSLTQGSGD…REESLCSDAS (85 aa)) are disordered. The span at 223-242 (STRENENSEDINRKRKREES) shows a compositional bias: basic and acidic residues. In terms of domain architecture, DUF724 spans 256–425 (LPFEKKLSIW…LQFQTTASAP (170 aa)). Residues 370 to 402 (AEKESIKIENERKILELQRLNEEVDKEIAQSKS) adopt a coiled-coil conformation.

In terms of tissue distribution, expressed in flowers.

The protein localises to the nucleus. Its function is as follows. May be involved in the polar growth of plant cells via transportation of RNAs. This is DUF724 domain-containing protein 9 from Arabidopsis thaliana (Mouse-ear cress).